The chain runs to 428 residues: UDP-N-acetylglucosamine 1-carboxyvinyltransferase 2 (428 aa).

22–23 (KN) provides a ligand contact to phosphoenolpyruvate. UDP-N-acetyl-alpha-D-glucosamine is bound at residue arginine 92. The Proton donor role is filled by cysteine 116. Cysteine 116 bears the 2-(S-cysteinyl)pyruvic acid O-phosphothioketal mark. Residues 121-125 (RPIDQ), aspartate 304, and isoleucine 326 each bind UDP-N-acetyl-alpha-D-glucosamine.

This sequence belongs to the EPSP synthase family. MurA subfamily.

It localises to the cytoplasm. It catalyses the reaction phosphoenolpyruvate + UDP-N-acetyl-alpha-D-glucosamine = UDP-N-acetyl-3-O-(1-carboxyvinyl)-alpha-D-glucosamine + phosphate. Its pathway is cell wall biogenesis; peptidoglycan biosynthesis. In terms of biological role, cell wall formation. Adds enolpyruvyl to UDP-N-acetylglucosamine. In Geobacillus kaustophilus (strain HTA426), this protein is UDP-N-acetylglucosamine 1-carboxyvinyltransferase 2.